Consider the following 488-residue polypeptide: MLSLATLDLLLSISESELIEEMVVGLLASPQLAIFFEKFPRIKRALMKDIPGWKQNLQQRIREAKVPAGLANEFALYQQSQLEDSPLFYAHLPQIVVQLQQWHSPFATQAKTLLHTADLERNPQTGDSFQTLFLQRWRVSLTLQTITIHHQLLEQEREQLLAELQQRLALSGALEPILATNDGAAGRLWDMSQGHLQRGDYQLLLQYGDFLQQQPELQQLAEQLGRSRSAKAQPTPDARFEPYTVMVRQPDTVPEEVSGIHQSNDILRLLPTELVMLGMSELEFEFYRRLLERRLLTYRLQGDNWQEKTLQRPISLKSHDEQPRGPFIVCVDTSGSMGGFSEQCAKAFCLALLRIALEDNRRCYIMLFATEIIHYELSSASGIEQAIRFLSQHFRGGTDLAACLSSTLSKMEERDWYDADAVIISDFIAQRLPEELIRKIKIQQQAHQHRFHAVAMSAYGKPGIMRIFDHIWRFDTGLKSRLIRRWKR.

This sequence belongs to the ViaA family. Homodimer. Interacts with RavA.

The protein resides in the cytoplasm. Its function is as follows. Component of the RavA-ViaA chaperone complex, which may act on the membrane to optimize the function of some of the respiratory chains. ViaA stimulates the ATPase activity of RavA. The protein is Regulatory protein ViaA of Yersinia enterocolitica serotype O:8 / biotype 1B (strain NCTC 13174 / 8081).